The sequence spans 213 residues: Pyrrolidone-carboxylate peptidase (213 aa).

Residues E81, C144, and H166 contribute to the active site.

It belongs to the peptidase C15 family. As to quaternary structure, homodimer.

The protein resides in the cytoplasm. It catalyses the reaction Release of an N-terminal pyroglutamyl group from a polypeptide, the second amino acid generally not being Pro.. Its function is as follows. Removes 5-oxoproline from various penultimate amino acid residues except L-proline. This Pseudomonas fluorescens protein is Pyrrolidone-carboxylate peptidase (pcp).